Consider the following 813-residue polypeptide: Protein translocase subunit SecA 2 (813 aa).

ATP is bound by residues glutamine 105, 123–127 (GEGKT), and aspartate 525.

It belongs to the SecA family. As to quaternary structure, monomer and homodimer. Part of the essential Sec protein translocation apparatus which comprises SecA, SecYEG and auxiliary proteins SecDF-YajC and YidC.

Its subcellular location is the cell inner membrane. The protein localises to the cytoplasm. The enzyme catalyses ATP + H2O + cellular proteinSide 1 = ADP + phosphate + cellular proteinSide 2.. Its function is as follows. Part of the Sec protein translocase complex. Interacts with the SecYEG preprotein conducting channel. Has a central role in coupling the hydrolysis of ATP to the transfer of proteins into and across the cell membrane, serving both as a receptor for the preprotein-SecB complex and as an ATP-driven molecular motor driving the stepwise translocation of polypeptide chains across the membrane. The chain is Protein translocase subunit SecA 2 from Rhodopseudomonas palustris (strain BisA53).